The chain runs to 456 residues: Bifunctional protein GlmU (456 aa).

Residues 1-229 (MSNSAMSVVI…LSEVEGVNNR (229 aa)) are pyrophosphorylase. UDP-N-acetyl-alpha-D-glucosamine contacts are provided by residues 11-14 (LAAG), lysine 25, glutamine 76, 81-82 (GT), 103-105 (YGD), glycine 140, glutamate 154, asparagine 169, and asparagine 227. Residue aspartate 105 participates in Mg(2+) binding. Residue asparagine 227 participates in Mg(2+) binding. Residues 230-250 (LQLSRLERIYQAEQSEKLLLA) form a linker region. The N-acetyltransferase stretch occupies residues 251 to 456 (GVMLLDPARF…QGWQRPVKKK (206 aa)). 2 residues coordinate UDP-N-acetyl-alpha-D-glucosamine: arginine 333 and lysine 351. Histidine 363 (proton acceptor) is an active-site residue. The UDP-N-acetyl-alpha-D-glucosamine site is built by tyrosine 366 and asparagine 377. Residues alanine 380, 386-387 (NY), serine 405, alanine 423, and arginine 440 contribute to the acetyl-CoA site.

It in the N-terminal section; belongs to the N-acetylglucosamine-1-phosphate uridyltransferase family. In the C-terminal section; belongs to the transferase hexapeptide repeat family. In terms of assembly, homotrimer. The cofactor is Mg(2+).

It localises to the cytoplasm. It carries out the reaction alpha-D-glucosamine 1-phosphate + acetyl-CoA = N-acetyl-alpha-D-glucosamine 1-phosphate + CoA + H(+). The catalysed reaction is N-acetyl-alpha-D-glucosamine 1-phosphate + UTP + H(+) = UDP-N-acetyl-alpha-D-glucosamine + diphosphate. The protein operates within nucleotide-sugar biosynthesis; UDP-N-acetyl-alpha-D-glucosamine biosynthesis; N-acetyl-alpha-D-glucosamine 1-phosphate from alpha-D-glucosamine 6-phosphate (route II): step 2/2. It functions in the pathway nucleotide-sugar biosynthesis; UDP-N-acetyl-alpha-D-glucosamine biosynthesis; UDP-N-acetyl-alpha-D-glucosamine from N-acetyl-alpha-D-glucosamine 1-phosphate: step 1/1. It participates in bacterial outer membrane biogenesis; LPS lipid A biosynthesis. Its function is as follows. Catalyzes the last two sequential reactions in the de novo biosynthetic pathway for UDP-N-acetylglucosamine (UDP-GlcNAc). The C-terminal domain catalyzes the transfer of acetyl group from acetyl coenzyme A to glucosamine-1-phosphate (GlcN-1-P) to produce N-acetylglucosamine-1-phosphate (GlcNAc-1-P), which is converted into UDP-GlcNAc by the transfer of uridine 5-monophosphate (from uridine 5-triphosphate), a reaction catalyzed by the N-terminal domain. This Serratia proteamaculans (strain 568) protein is Bifunctional protein GlmU.